The primary structure comprises 144 residues: Large ribosomal subunit protein uL24 (144 aa).

The interval 1–22 (MKFNKMVSSDRGKNRKRHFNAP) is disordered. The span at 13–22 (KNRKRHFNAP) shows a compositional bias: basic residues.

The protein belongs to the universal ribosomal protein uL24 family.

In Littorina littorea (Common periwinkle), this protein is Large ribosomal subunit protein uL24 (RPL26).